The chain runs to 332 residues: Alpha/beta hydrolase domain-containing protein aho-3 (332 aa).

A compositionally biased stretch (low complexity) spans 1–15 (MSSGAPSGSSMSSTP). The interval 1 to 24 (MSSGAPSGSSMSSTPGSPPPRAGG) is disordered. Active-site charge relay system residues include serine 191, aspartate 256, and histidine 285.

It belongs to the AB hydrolase superfamily. ABHD17 family. Palmitoylated on cysteine residues located in a cysteine cluster at the N-terminus which promotes membrane localization and localization to sensory neuron endings. In terms of tissue distribution, expressed in a subset of neurons including AIY, HSN, ADF, AFD, AWC, AWB and NSM, hypodermis, pharyngeal muscle and intestine.

It is found in the cell membrane. It localises to the cytoplasmic vesicle membrane. It carries out the reaction S-hexadecanoyl-L-cysteinyl-[protein] + H2O = L-cysteinyl-[protein] + hexadecanoate + H(+). Its function is as follows. Hydrolyzes fatty acids from S-acylated cysteine residues in proteins. Acts in sensory neurons including AWC to regulate starvation-induced thermotaxis plasticity and salt learning behavior. The polypeptide is Alpha/beta hydrolase domain-containing protein aho-3 (Caenorhabditis elegans).